The chain runs to 335 residues: POU domain, class 5, transcription factor 2 (335 aa).

The tract at residues 1 to 23 (MAGRRSSNVCPFPGNSGGGLEGP) is disordered. The POU-specific domain occupies 113-187 (DVSAIQKEME…LLKMWLEEVD (75 aa)). A DNA-binding region (homeobox) is located at residues 205-264 (RKRRRASRERRIGSNLEKLFLQCPEPTPQQISYIAGRLRLQKDLVQVWFSNRSQMAGWPT).

The protein belongs to the POU transcription factor family. Class-5 subfamily. In terms of tissue distribution, highly restricted to adult testis.

The protein localises to the nucleus. Functionally, transcription factor that binds preferentially to the octamer motif (5'-ATGTTAAT-3'). May exert a regulatory function in meiotic events that are required for terminal differentiation of male germ cell. This is POU domain, class 5, transcription factor 2 (Pou5f2) from Rattus norvegicus (Rat).